The primary structure comprises 393 residues: Putative competence-damage inducible protein (393 aa).

Belongs to the CinA family.

The protein is Putative competence-damage inducible protein of Streptococcus suis (strain 05ZYH33).